The primary structure comprises 529 residues: Glucose-6-phosphate isomerase (529 aa).

Residue glutamate 323 is the Proton donor of the active site. Catalysis depends on residues histidine 352 and lysine 456.

Belongs to the GPI family.

It localises to the cytoplasm. It carries out the reaction alpha-D-glucose 6-phosphate = beta-D-fructose 6-phosphate. It participates in carbohydrate biosynthesis; gluconeogenesis. It functions in the pathway carbohydrate degradation; glycolysis; D-glyceraldehyde 3-phosphate and glycerone phosphate from D-glucose: step 2/4. Catalyzes the reversible isomerization of glucose-6-phosphate to fructose-6-phosphate. The polypeptide is Glucose-6-phosphate isomerase (Geobacter sulfurreducens (strain ATCC 51573 / DSM 12127 / PCA)).